A 464-amino-acid chain; its full sequence is Probable pectin lyase F (464 aa).

The N-terminal stretch at 1-20 is a signal peptide; sequence MAIIRSVIAATALLGAAVNA. A disulfide bridge links Cys-80 with Cys-103. An N-linked (GlcNAc...) asparagine glycan is attached at Asn-126. Arg-252 is an active-site residue. Cys-319 and Cys-327 form a disulfide bridge. The interval 424–464 is disordered; the sequence is EHEVSTPAVPTPTPVPSSVGSHGSTAGSSHPPAFSRTSFES. A compositionally biased stretch (low complexity) spans 439-448; sequence PSSVGSHGST.

This sequence belongs to the polysaccharide lyase 1 family.

The protein resides in the secreted. The catalysed reaction is Eliminative cleavage of (1-&gt;4)-alpha-D-galacturonan methyl ester to give oligosaccharides with 4-deoxy-6-O-methyl-alpha-D-galact-4-enuronosyl groups at their non-reducing ends.. Functionally, pectinolytic enzymes consist of four classes of enzymes: pectin lyase, polygalacturonase, pectin methylesterase and rhamnogalacturonase. Among pectinolytic enzymes, pectin lyase is the most important in depolymerization of pectin, since it cleaves internal glycosidic bonds of highly methylated pectins. The protein is Probable pectin lyase F (pelF) of Emericella nidulans (strain FGSC A4 / ATCC 38163 / CBS 112.46 / NRRL 194 / M139) (Aspergillus nidulans).